The chain runs to 5142 residues: Protein piccolo (5142 aa).

A compositionally biased stretch (low complexity) spans 1–21 (MGNEASLEGEGLPEGLAAAAA). 2 disordered regions span residues 1–154 (MGNE…SMMP) and 177–583 (DLIS…PSQG). Composition is skewed to basic and acidic residues over residues 114–125 (RTTDTFRSEQKL), 136–150 (KESK…EHKS), and 188–202 (ETTK…EQGK). Polar residues predominate over residues 232–244 (QDGTPKSISSQQP). Composition is skewed to pro residues over residues 298–317 (LPSP…PPAQ) and 352–371 (PVQP…PAKP). Residues 376–385 (TGSEKPSSEQ) are compositionally biased toward polar residues. The 10 X 10 AA tandem approximate repeats of P-A-K-P-Q-P-Q-Q-P-X stretch occupies residues 397-555 (VGKTPAQQPG…PAKPSAQQST (159 aa)). Residues 467 to 493 (TKPPSQLPGPAKPPPQQPGPAKPPPQQ) show a composition bias toward pro residues. Residues 494-506 (PGSAKPPSQQPGS) show a composition bias toward low complexity. Residues 507-522 (TKPPPQQPGPAKPSPQ) show a composition bias toward pro residues. Low complexity predominate over residues 523-554 (QPGSTKPPSQQPGSAKPSAQQPSPAKPSAQQS). Residues 589–613 (CPLCNTTELLLHVPEKANFNTCTEC) form a C4-type zinc finger. Disordered stretches follow at residues 650-929 (LAPV…TVTG) and 945-1058 (LIST…PEST). A compositionally biased stretch (low complexity) spans 673 to 683 (SKSSPQPQQTS). Basic and acidic residues-rich tracts occupy residues 684 to 702 (PKKD…EPKK) and 743 to 755 (EQDK…DKPK). Over residues 765–774 (DLVSSSSATT) the composition is skewed to polar residues. Basic and acidic residues predominate over residues 841–857 (KGQKQVDPVQKKEEPKK). The segment covering 873-882 (KGSPTPPGPR) has biased composition (pro residues). A compositionally biased stretch (polar residues) spans 889–927 (VPTPQQSPKPQEQSRRFSLNLGSITDAPKSQPTTPQETV). 2 positions are modified to phosphoserine: serine 906 and serine 918. Position 922 is a phosphothreonine (threonine 922). Positions 949–969 (AGQPGPHSQSGPGAPMKQAPA) are enriched in low complexity. Composition is skewed to basic and acidic residues over residues 996 to 1012 (VKKE…EPKA) and 1019 to 1034 (KRTE…KDSK). A C4-type zinc finger spans residues 1059-1082 (CPLCKTELNIGSKDPPNFNTCTEC). Disordered regions lie at residues 1120 to 1163 (GDIR…QEQE), 1183 to 1386 (EKIP…TDEK), 1391 to 1410 (GLKK…SDLA), and 1423 to 1868 (QAST…SDPE). Over residues 1126–1139 (PPAPSGPKASPMPV) the composition is skewed to pro residues. 3 stretches are compositionally biased toward basic and acidic residues: residues 1193–1265 (QKQE…HDLL), 1307–1318 (PKEDDKTTKTIK), and 1330–1347 (DQVE…DKSD). Positions 1348–1358 (TSSSQQPKSPQ) are enriched in low complexity. Serine 1356, serine 1366, serine 1367, serine 1396, serine 1398, serine 1401, serine 1402, and serine 1405 each carry phosphoserine. Over residues 1359-1374 (GLSDTGYSSDGISSSL) the composition is skewed to polar residues. Residues 1398–1407 (SQESSPSSPS) show a composition bias toward low complexity. Basic and acidic residues-rich tracts occupy residues 1428–1451 (ADEK…DQEK) and 1469–1510 (KESQ…REPY). Serine 1516, serine 1517, serine 1519, serine 1522, serine 1546, serine 1549, serine 1570, and serine 1572 each carry phosphoserine. Positions 1564 to 1576 (SADEDASGSEDDE) are enriched in acidic residues. A Phosphothreonine modification is found at threonine 1617. A phosphoserine mark is found at serine 1618, serine 1628, and serine 1640. A compositionally biased stretch (acidic residues) spans 1631–1640 (DEDDEAFDES). Over residues 1641-1652 (PELKYRETKSQE) the composition is skewed to basic and acidic residues. A compositionally biased stretch (polar residues) spans 1671 to 1689 (ELNSTIADKYSAESSQKKT). Over residues 1693-1703 (FDEEPELEMES) the composition is skewed to acidic residues. Serine 1703 is modified (phosphoserine). Threonine 1705 bears the Phosphothreonine mark. Phosphoserine is present on residues serine 1707 and serine 1712. The span at 1715–1732 (EGSSSLHASSFTPGTSPT) shows a compositional bias: polar residues. Residues 1772-1785 (DSSEEEELREEEEL) are compositionally biased toward acidic residues. Residues serine 1773 and serine 1774 each carry the phosphoserine modification. A compositionally biased stretch (basic and acidic residues) spans 1786–1799 (LKEQEKQREIEQQQ). Threonine 1825 bears the Phosphothreonine mark. Serine 1831 is subject to Phosphoserine. The segment covering 1840–1855 (EELRQAAEMEELHRSS) has biased composition (basic and acidic residues). Phosphoserine is present on residues serine 1860, serine 1865, serine 1873, and serine 1894. Disordered regions lie at residues 2169–2192 (PSES…SSVC), 2365–2438 (ETFG…PTIL), and 2504–2536 (EPSK…PTGL). Low complexity-rich tracts occupy residues 2174–2192 (TSVP…SSVC) and 2374–2387 (SQLP…SSLP). Composition is skewed to pro residues over residues 2404–2433 (QPPP…PTSP) and 2506–2517 (SKPPIAPKPVIP). Residue serine 2562 is modified to Phosphoserine. The residue at position 3069 (threonine 3069) is a Phosphothreonine. 2 disordered regions span residues 3407–3508 (EKQP…DKTK) and 3558–3626 (KTYK…LYSP). Basic and acidic residues predominate over residues 3432-3441 (DDPRSFKKIV). Phosphoserine is present on serine 3443. Threonine 3447 and threonine 3474 each carry phosphothreonine. Residues 3474 to 3483 (TDDEDQDEWD) are compositionally biased toward acidic residues. A compositionally biased stretch (polar residues) spans 3574–3585 (DTQSPQYLSATS). A phosphoserine mark is found at serine 3577, serine 3585, serine 3615, serine 3619, serine 3625, serine 3628, serine 3631, serine 3652, serine 3678, serine 3680, and serine 3686. Disordered regions lie at residues 3652–3746 (SPQK…MGTV) and 3833–3908 (YMSD…QQSH). Polar residues-rich tracts occupy residues 3701 to 3716 (EGYT…SSGA) and 3733 to 3745 (STGT…TMGT). Serine 3835 is modified (phosphoserine). Residues 3845–3857 (TRIESQHGIERPR) are compositionally biased toward basic and acidic residues. The span at 3859 to 3908 (APQTEFSQFIPPQTQTESQLVPPTSPYTQYQYSSPALPTQAPTSYTQQSH) shows a compositional bias: polar residues. Serine 4088 and serine 4204 each carry phosphoserine. The tract at residues 4278 to 4301 (EADKPYSSGSRSRPSSRPSSVYGL) is disordered. A compositionally biased stretch (low complexity) spans 4282-4301 (PYSSGSRSRPSSRPSSVYGL). Phosphoserine occurs at positions 4358, 4362, 4365, 4394, and 4430. Residues 4389 to 4411 (RDQFGSSHSLPEVQQHMREESRT) are disordered. The PDZ domain occupies 4496–4590 (RIKITRDSKD…EAEICVRLDL (95 aa)). Disordered stretches follow at residues 4597–4618 (ENSQ…KSPG) and 4645–4690 (EKGS…TKVV). The segment covering 4598–4615 (NSQHLELHEPPKAVDKAK) has biased composition (basic and acidic residues). Low complexity predominate over residues 4652 to 4673 (SGPTSAGSSSVPSPGQPGSPSV). Serine 4664 bears the Phosphoserine mark. One can recognise a C2 1 domain in the interval 4694 to 4823 (ITGEIQLQIN…SHLDNTPRWY (130 aa)). The Ca(2+) site is built by aspartate 4723 and aspartate 4729. At serine 4778 the chain carries Phosphoserine. Positions 4793, 4795, 4798, and 4801 each coordinate Ca(2+). Disordered regions lie at residues 4830–4907 (ESID…VTQT) and 4930–4986 (PTKP…QNGQ). Composition is skewed to low complexity over residues 4838-4853 (HSSQ…SVIK) and 4877-4887 (SSPGSSKSSSE). Polar residues predominate over residues 4895–4907 (PSRSQSKTSVTQT). Over residues 4941–4965 (SSVSTGSSGSSFGSGYSVDSEGSSS) the composition is skewed to low complexity. One can recognise a C2 2 domain in the interval 5007–5132 (VMGEIKIALK…DLRKRIVNWH (126 aa)).

As to quaternary structure, interacts with BSN, ERC2/CAST1, RIMS1 and UNC13A. Interacts (via C-terminus) with TRIO (via N-terminus). Interacts with CTBP1. Interacts with SIAH1; this interaction negatively regulates SIAH1 E3 ligase activity. Directly interacts with GIT1 and GIT2. Ca(2+) is required as a cofactor. In terms of tissue distribution, moderately expressed in the developing cerebral cortex.

The protein localises to the presynaptic active zone. Its function is as follows. Scaffold protein of the presynaptic cytomatrix at the active zone (CAZ) which is the place in the synapse where neurotransmitter is released. After synthesis, participates in the formation of Golgi-derived membranous organelles termed Piccolo-Bassoon transport vesicles (PTVs) that are transported along axons to sites of nascent synaptic contacts. At the presynaptic active zone, regulates the spatial organization of synaptic vesicle cluster, the protein complexes that execute membrane fusion and compensatory endocytosis. Organizes as well the readily releasable pool of synaptic vesicles and safeguards a fraction of them to be not immediately available for action potential-induced release. Also functions in processes other than assembly such as the regulation of specific presynaptic protein ubiquitination by interacting with SIAH1 or the regulation of presynaptic autophagy. Also mediates synapse to nucleus communication leading to reconfiguration of gene expression by associating with the transcriptional corepressor CTBP1 and by subsequently reducing the size of its pool available for nuclear import. In Homo sapiens (Human), this protein is Protein piccolo.